We begin with the raw amino-acid sequence, 708 residues long: Polyribonucleotide nucleotidyltransferase (708 aa).

2 residues coordinate Mg(2+): Asp488 and Asp494. One can recognise a KH domain in the interval 555-614 (PRIYTMKIPQKKIAEVIGKGGATIRQLTEETGTTIEIGDDGTIKIAATDGESAANAISRI). The region spanning 624-692 (GTIYEGKVVR…RQGRVRLSIK (69 aa)) is the S1 motif domain.

Belongs to the polyribonucleotide nucleotidyltransferase family. Component of the RNA degradosome, which is a multiprotein complex involved in RNA processing and mRNA degradation. The cofactor is Mg(2+).

The protein resides in the cytoplasm. It carries out the reaction RNA(n+1) + phosphate = RNA(n) + a ribonucleoside 5'-diphosphate. Functionally, involved in mRNA degradation. Catalyzes the phosphorolysis of single-stranded polyribonucleotides processively in the 3'- to 5'-direction. This chain is Polyribonucleotide nucleotidyltransferase, found in Pseudoalteromonas translucida (strain TAC 125).